The following is a 606-amino-acid chain: Replication protein E1 (606 aa).

The Nuclear localization signal motif lies at 76–78; the sequence is KRK. Residues serine 81 and serine 89 each carry the phosphoserine; by host modification. The segment at 144 to 307 is DNA-binding region; the sequence is GTGDVDIDYL…TVLGHQNAEA (164 aa). Positions 406–556 constitute an SF3 helicase domain; it reads VNFIMFLAAL…FPMKSDNTPQ (151 aa). 432–439 is an ATP binding site; sequence GPPNSGKS. Lysine 513 participates in a covalent cross-link: Glycyl lysine isopeptide (Lys-Gly) (interchain with G-Cter in SUMO). The disordered stretch occupies residues 581-606; sequence EEEEEGEHGETQRAFQCSARSANEHI. Polar residues predominate over residues 593–606; it reads RAFQCSARSANEHI.

Belongs to the papillomaviridae E1 protein family. In terms of assembly, can form hexamers. Interacts with E2 protein; this interaction increases E1 DNA binding specificity. Interacts with host DNA polymerase subunit POLA2. Interacts with host single stranded DNA-binding protein RPA1. Interacts with host TOP1; this interaction stimulates the enzymatic activity of TOP1. Post-translationally, phosphorylated. Sumoylated.

It is found in the host nucleus. It carries out the reaction Couples ATP hydrolysis with the unwinding of duplex DNA by translocating in the 3'-5' direction.. The enzyme catalyses ATP + H2O = ADP + phosphate + H(+). Functionally, ATP-dependent DNA 3'-5' helicase required for initiation of viral DNA replication. It forms a complex with the viral E2 protein. The E1-E2 complex binds to the replication origin which contains binding sites for both proteins. During the initial step, a dimer of E1 interacts with a dimer of protein E2 leading to a complex that binds the viral origin of replication with high specificity. Then, a second dimer of E1 displaces the E2 dimer in an ATP-dependent manner to form the E1 tetramer. Following this, two E1 monomers are added to each half of the site, which results in the formation of two E1 trimers on the viral ori. Subsequently, two hexamers will be created. The double hexamer acts as a bi-directional helicase machinery and unwinds the viral DNA and then recruits the host DNA polymerase to start replication. This Human papillomavirus type RTRX7 protein is Replication protein E1.